The sequence spans 365 residues: Chorismate synthase (365 aa).

Position 46 (Arg-46) interacts with NADP(+). FMN is bound by residues 124 to 126 (RAS), Gly-284, 299 to 303 (KPTPS), and Arg-326.

This sequence belongs to the chorismate synthase family. FMNH2 serves as cofactor.

The catalysed reaction is 5-O-(1-carboxyvinyl)-3-phosphoshikimate = chorismate + phosphate. It participates in metabolic intermediate biosynthesis; chorismate biosynthesis; chorismate from D-erythrose 4-phosphate and phosphoenolpyruvate: step 7/7. Functionally, catalyzes the anti-1,4-elimination of the C-3 phosphate and the C-6 proR hydrogen from 5-enolpyruvylshikimate-3-phosphate (EPSP) to yield chorismate, which is the branch point compound that serves as the starting substrate for the three terminal pathways of aromatic amino acid biosynthesis. This reaction introduces a second double bond into the aromatic ring system. The protein is Chorismate synthase of Pyrobaculum neutrophilum (strain DSM 2338 / JCM 9278 / NBRC 100436 / V24Sta) (Thermoproteus neutrophilus).